Here is a 285-residue protein sequence, read N- to C-terminus: UPF0354 protein SH1179 (285 aa).

Belongs to the UPF0354 family.

The polypeptide is UPF0354 protein SH1179 (Staphylococcus haemolyticus (strain JCSC1435)).